A 391-amino-acid chain; its full sequence is Ferrochelatase (391 aa).

Residues histidine 196 and glutamate 281 each contribute to the Fe cation site.

This sequence belongs to the ferrochelatase family.

It is found in the cytoplasm. It catalyses the reaction heme b + 2 H(+) = protoporphyrin IX + Fe(2+). It functions in the pathway porphyrin-containing compound metabolism; protoheme biosynthesis; protoheme from protoporphyrin-IX: step 1/1. Catalyzes the ferrous insertion into protoporphyrin IX. In Prochlorococcus marinus subsp. pastoris (strain CCMP1986 / NIES-2087 / MED4), this protein is Ferrochelatase.